The sequence spans 102 residues: Small ribosomal subunit protein eS24 (102 aa).

The protein belongs to the eukaryotic ribosomal protein eS24 family.

This Methanococcus maripaludis (strain DSM 14266 / JCM 13030 / NBRC 101832 / S2 / LL) protein is Small ribosomal subunit protein eS24.